A 337-amino-acid polypeptide reads, in one-letter code: MSAVRIGQYTLRNNLILAPMAGVTDQPFRTLCQRLGAGMVVSEMVSSDMSLWNSRKSSLRRIHEGDPEPRSVQIAGGDAQMMAAAAKANVEAGAQIIDINMGCPAKKVCNKAAGSALLRDEALVSEILHAVVSAVDVPVTLKIRTGWDRANKNGLNVAKIAEQAGIQALAVHGRTRADLYTGEAEYDTIGAIKQAVSIPVFANGDITSPEKARAVLETTGVDGLLIGRAAQGRPWIFREIEHYLRTGEHLPAPQLDEVERILLEHLAALHAFYGDVMGVRIARKHVGWYLATRPGGKEFRARFNALEDTQAQCANVRAFFSERRQSLETEDGQGVAA.

FMN is bound by residues 19–21 and glutamine 73; that span reads PMA. Cysteine 103 functions as the Proton donor in the catalytic mechanism. Residues lysine 142, 203–205, and 227–228 contribute to the FMN site; these read NGD and GR.

It belongs to the Dus family. DusB subfamily. FMN serves as cofactor.

It carries out the reaction a 5,6-dihydrouridine in tRNA + NAD(+) = a uridine in tRNA + NADH + H(+). The enzyme catalyses a 5,6-dihydrouridine in tRNA + NADP(+) = a uridine in tRNA + NADPH + H(+). Functionally, catalyzes the synthesis of 5,6-dihydrouridine (D), a modified base found in the D-loop of most tRNAs, via the reduction of the C5-C6 double bond in target uridines. The polypeptide is tRNA-dihydrouridine synthase B (Pseudomonas putida (strain ATCC 47054 / DSM 6125 / CFBP 8728 / NCIMB 11950 / KT2440)).